Consider the following 374-residue polypeptide: L-serine/homoserine O-acetyltransferase (374 aa).

Residues 46–357 (AVLVLTGLSP…TPAGHDAFLV (312 aa)) enclose the AB hydrolase-1 domain. The Nucleophile role is filled by serine 149. Residues aspartate 319 and histidine 352 contribute to the active site.

Belongs to the AB hydrolase superfamily. MetX family. In terms of assembly, homodimer.

It localises to the cytoplasm. The enzyme catalyses L-serine + acetyl-CoA = O-acetyl-L-serine + CoA. The catalysed reaction is L-homoserine + acetyl-CoA = O-acetyl-L-homoserine + CoA. Its pathway is antibiotic biosynthesis. In terms of biological role, involved in the biosynthesis of the antibiotic D-cycloserine (DCS), a cyclic structural analog of D-alanine, used as an antitubercular agent. Catalyzes the transfer of the acetyl group from acetyl-CoA to the hydroxyl group of L-serine to yield the activated serine, O-acetyl-L-serine. It prefers L-serine over L-homoserine. The sequence is that of L-serine/homoserine O-acetyltransferase from Streptomyces lavendulae.